The following is a 1339-amino-acid chain: Aldehyde oxidase 1 (1339 aa).

Positions 5–92 constitute a 2Fe-2S ferredoxin-type domain; that stretch reads SELLFYVNGR…GAAVTTVEGI (88 aa). 4 residues coordinate [2Fe-2S] cluster: C44, C49, C52, and C74. Q113 lines the Mo-molybdopterin pocket. C114, C117, C149, and C151 together coordinate [2Fe-2S] cluster. Mo-molybdopterin is bound at residue C151. An FAD-binding PCMH-type domain is found at 236-421; that stretch reads FGSDRMTWIS…ISVNIPYSRK (186 aa). FAD contacts are provided by residues 264 to 271, A345, S354, H358, D367, and L411; that span reads VVMGNTSV. Mo-molybdopterin is bound by residues 807-808 and M1048; that span reads AF. Position 1069 is a phosphoserine (S1069). Residues 1089–1092, Q1204, and L1269 each bind Mo-molybdopterin; that span reads GSVV. The Proton acceptor; for azaheterocycle hydroxylase activity role is filled by E1271.

Belongs to the xanthine dehydrogenase family. In terms of assembly, homodimer. Requires [2Fe-2S] cluster as cofactor. FAD is required as a cofactor. It depends on Mo-molybdopterin as a cofactor. Post-translationally, the N-terminus is blocked. Expressed at high levels in liver, lung and spleen. Also expressed in kindey, eye, testis, duodenum, esophagus and thymus (at protein level).

It localises to the cytoplasm. It catalyses the reaction an aldehyde + O2 + H2O = a carboxylate + H2O2 + H(+). The catalysed reaction is retinal + O2 + H2O = retinoate + H2O2 + H(+). Its function is as follows. Oxidase with broad substrate specificity, oxidizing aromatic azaheterocycles, such as N1-methylnicotinamide, N-methylphthalazinium and phthalazine, as well as aldehydes, such as benzaldehyde, retinal, pyridoxal, and vanillin. Plays a key role in the metabolism of xenobiotics and drugs containing aromatic azaheterocyclic substituents. Is probably involved in the regulation of reactive oxygen species homeostasis. May be a prominent source of superoxide generation via the one-electron reduction of molecular oxygen. May also catalyze nitric oxide (NO) production via the reduction of nitrite to NO with NADH or aldehyde as electron donor. May play a role in adipogenesis. This Bos taurus (Bovine) protein is Aldehyde oxidase 1.